A 241-amino-acid chain; its full sequence is Golgi-associated RAB2 interactor protein 6 (241 aa).

It belongs to the GARIN family.

The sequence is that of Golgi-associated RAB2 interactor protein 6 from Homo sapiens (Human).